Consider the following 346-residue polypeptide: Holliday junction branch migration complex subunit RuvB (346 aa).

Residues 4–185 (SDRIITASPF…FGIVSRLEFY (182 aa)) are large ATPase domain (RuvB-L). Residues Leu-24, Arg-25, Gly-66, Lys-69, Thr-70, Thr-71, 132–134 (EDY), Arg-175, Tyr-185, and Arg-222 each bind ATP. Position 70 (Thr-70) interacts with Mg(2+). The small ATPAse domain (RuvB-S) stretch occupies residues 186 to 256 (TADELGKIVT…VADAALQMLD (71 aa)). Residues 259–346 (ATGLDVLDRK…TTVPSLFDPD (88 aa)) are head domain (RuvB-H). Positions 295, 314, and 319 each coordinate DNA.

It belongs to the RuvB family. In terms of assembly, homohexamer. Forms an RuvA(8)-RuvB(12)-Holliday junction (HJ) complex. HJ DNA is sandwiched between 2 RuvA tetramers; dsDNA enters through RuvA and exits via RuvB. An RuvB hexamer assembles on each DNA strand where it exits the tetramer. Each RuvB hexamer is contacted by two RuvA subunits (via domain III) on 2 adjacent RuvB subunits; this complex drives branch migration. In the full resolvosome a probable DNA-RuvA(4)-RuvB(12)-RuvC(2) complex forms which resolves the HJ.

The protein resides in the cytoplasm. The catalysed reaction is ATP + H2O = ADP + phosphate + H(+). The RuvA-RuvB-RuvC complex processes Holliday junction (HJ) DNA during genetic recombination and DNA repair, while the RuvA-RuvB complex plays an important role in the rescue of blocked DNA replication forks via replication fork reversal (RFR). RuvA specifically binds to HJ cruciform DNA, conferring on it an open structure. The RuvB hexamer acts as an ATP-dependent pump, pulling dsDNA into and through the RuvAB complex. RuvB forms 2 homohexamers on either side of HJ DNA bound by 1 or 2 RuvA tetramers; 4 subunits per hexamer contact DNA at a time. Coordinated motions by a converter formed by DNA-disengaged RuvB subunits stimulates ATP hydrolysis and nucleotide exchange. Immobilization of the converter enables RuvB to convert the ATP-contained energy into a lever motion, pulling 2 nucleotides of DNA out of the RuvA tetramer per ATP hydrolyzed, thus driving DNA branch migration. The RuvB motors rotate together with the DNA substrate, which together with the progressing nucleotide cycle form the mechanistic basis for DNA recombination by continuous HJ branch migration. Branch migration allows RuvC to scan DNA until it finds its consensus sequence, where it cleaves and resolves cruciform DNA. The sequence is that of Holliday junction branch migration complex subunit RuvB from Nitrosomonas europaea (strain ATCC 19718 / CIP 103999 / KCTC 2705 / NBRC 14298).